Consider the following 159-residue polypeptide: Putative esterase DR_2406 (159 aa).

This sequence belongs to the thioesterase PaaI family.

This is Putative esterase DR_2406 from Deinococcus radiodurans (strain ATCC 13939 / DSM 20539 / JCM 16871 / CCUG 27074 / LMG 4051 / NBRC 15346 / NCIMB 9279 / VKM B-1422 / R1).